The chain runs to 224 residues: Probable 2-phosphosulfolactate phosphatase (224 aa).

This sequence belongs to the ComB family. The cofactor is Mg(2+).

It catalyses the reaction (2R)-O-phospho-3-sulfolactate + H2O = (2R)-3-sulfolactate + phosphate. This Pseudothermotoga lettingae (strain ATCC BAA-301 / DSM 14385 / NBRC 107922 / TMO) (Thermotoga lettingae) protein is Probable 2-phosphosulfolactate phosphatase.